A 553-amino-acid chain; its full sequence is Cysteine desulfurase IscS (553 aa).

Over residues 102 to 122 the composition is skewed to low complexity; that stretch reads NNISSNNTQYNNNSSNSGSLN. A disordered region spans residues 102–125; the sequence is NNISSNNTQYNNNSSNSGSLNDEG.

This sequence belongs to the class-V pyridoxal-phosphate-dependent aminotransferase family. NifS/IscS subfamily. In terms of assembly, homotetramer. Interacts with Isd11; the interaction enhances cysteine desulfurase activity of IscS. Interacts with IscU. Component of a complex, at least composed of IscS, Isd11 and IscU. Pyridoxal 5'-phosphate is required as a cofactor.

The protein resides in the mitochondrion. It carries out the reaction (sulfur carrier)-H + L-cysteine = (sulfur carrier)-SH + L-alanine. Its pathway is cofactor biosynthesis; iron-sulfur cluster biosynthesis. In terms of biological role, catalyzes sulfur activation and mobilization in iron-sulfur cluster formation (ISC) pathway for iron-sulfur (Fe-S) cluster biogenesis. Active when in complex with a partner protein Isd11. This is Cysteine desulfurase IscS from Plasmodium falciparum (isolate 3D7).